Reading from the N-terminus, the 188-residue chain is uncharacterized protein (188 aa).

The protein belongs to the isochorismatase family.

This is an uncharacterized protein from Escherichia coli O157:H7.